The chain runs to 304 residues: UDP-3-O-acyl-N-acetylglucosamine deacetylase (304 aa).

Zn(2+) is bound by residues His-78, His-237, and Asp-241. The active-site Proton donor is His-264.

It belongs to the LpxC family. Zn(2+) is required as a cofactor.

The catalysed reaction is a UDP-3-O-[(3R)-3-hydroxyacyl]-N-acetyl-alpha-D-glucosamine + H2O = a UDP-3-O-[(3R)-3-hydroxyacyl]-alpha-D-glucosamine + acetate. It functions in the pathway glycolipid biosynthesis; lipid IV(A) biosynthesis; lipid IV(A) from (3R)-3-hydroxytetradecanoyl-[acyl-carrier-protein] and UDP-N-acetyl-alpha-D-glucosamine: step 2/6. Catalyzes the hydrolysis of UDP-3-O-myristoyl-N-acetylglucosamine to form UDP-3-O-myristoylglucosamine and acetate, the committed step in lipid A biosynthesis. This is UDP-3-O-acyl-N-acetylglucosamine deacetylase from Legionella pneumophila (strain Lens).